The chain runs to 365 residues: Putative agmatine deiminase (365 aa).

Residues glutamate 214 and aspartate 220 each contribute to the agmatine site. Cysteine 357 acts as the Amidino-cysteine intermediate in catalysis.

It belongs to the agmatine deiminase family. Tetramer of two homodimers.

The catalysed reaction is agmatine + H2O = N-carbamoylputrescine + NH4(+). The polypeptide is Putative agmatine deiminase (Enterococcus faecalis (strain ATCC 700802 / V583)).